The following is a 264-amino-acid chain: Tryptophan synthase alpha chain (264 aa).

Catalysis depends on proton acceptor residues Glu49 and Asp60.

Belongs to the TrpA family. In terms of assembly, tetramer of two alpha and two beta chains.

It carries out the reaction (1S,2R)-1-C-(indol-3-yl)glycerol 3-phosphate + L-serine = D-glyceraldehyde 3-phosphate + L-tryptophan + H2O. It participates in amino-acid biosynthesis; L-tryptophan biosynthesis; L-tryptophan from chorismate: step 5/5. Its function is as follows. The alpha subunit is responsible for the aldol cleavage of indoleglycerol phosphate to indole and glyceraldehyde 3-phosphate. The chain is Tryptophan synthase alpha chain from Microcystis aeruginosa (strain NIES-843 / IAM M-2473).